Consider the following 196-residue polypeptide: Peptidyl-tRNA hydrolase (196 aa).

Y14 contacts tRNA. Catalysis depends on H19, which acts as the Proton acceptor. TRNA-binding residues include F64, N66, and N112.

It belongs to the PTH family. As to quaternary structure, monomer.

It is found in the cytoplasm. The catalysed reaction is an N-acyl-L-alpha-aminoacyl-tRNA + H2O = an N-acyl-L-amino acid + a tRNA + H(+). Functionally, hydrolyzes ribosome-free peptidyl-tRNAs (with 1 or more amino acids incorporated), which drop off the ribosome during protein synthesis, or as a result of ribosome stalling. Its function is as follows. Catalyzes the release of premature peptidyl moieties from peptidyl-tRNA molecules trapped in stalled 50S ribosomal subunits, and thus maintains levels of free tRNAs and 50S ribosomes. The polypeptide is Peptidyl-tRNA hydrolase (Solibacter usitatus (strain Ellin6076)).